Consider the following 377-residue polypeptide: Sterol 24-C-methyltransferase (377 aa).

Belongs to the class I-like SAM-binding methyltransferase superfamily. Erg6/SMT family.

It catalyses the reaction lanosterol + S-adenosyl-L-methionine = eburicol + S-adenosyl-L-homocysteine + H(+). The catalysed reaction is eburicol + S-adenosyl-L-methionine = (24Z)-ethylidenelanosterol + S-adenosyl-L-homocysteine + H(+). The protein operates within steroid metabolism. Its function is as follows. Catalyzes the transfer of 2 methyl groups from 2 S-adenosyl-methionine molecules to the C-24 of lanosterol, producing first eburicol (24-methylenelanosterol) from lanosterol and then pneumocysterol (24Z-ethylidenelanosterol) from eburicol. The protein is Sterol 24-C-methyltransferase (erg6) of Pneumocystis carinii (strain B80) (Rat pneumocystis pneumonia agent).